A 144-amino-acid chain; its full sequence is Glutaredoxin-C6 (144 aa).

The region spanning 39–143 (EAKIRRLISE…PKLVQVGALW (105 aa)) is the Glutaredoxin domain. Cysteine 59 and cysteine 62 are disulfide-bonded.

Belongs to the glutaredoxin family. CC-type subfamily.

The protein resides in the cytoplasm. Functionally, has a glutathione-disulfide oxidoreductase activity in the presence of NADPH and glutathione reductase. Reduces low molecular weight disulfides and proteins. The polypeptide is Glutaredoxin-C6 (GRXC6) (Arabidopsis thaliana (Mouse-ear cress)).